A 136-amino-acid polypeptide reads, in one-letter code: 1,4-dihydroxy-2-naphthoyl-CoA hydrolase (136 aa).

Asp16 is an active-site residue.

Belongs to the 4-hydroxybenzoyl-CoA thioesterase family. DHNA-CoA hydrolase subfamily.

It catalyses the reaction 1,4-dihydroxy-2-naphthoyl-CoA + H2O = 1,4-dihydroxy-2-naphthoate + CoA + H(+). It participates in cofactor biosynthesis; phylloquinone biosynthesis. The protein operates within quinol/quinone metabolism; 1,4-dihydroxy-2-naphthoate biosynthesis; 1,4-dihydroxy-2-naphthoate from chorismate: step 7/7. Catalyzes the hydrolysis of 1,4-dihydroxy-2-naphthoyl-CoA (DHNA-CoA) to 1,4-dihydroxy-2-naphthoate (DHNA), a reaction involved in phylloquinone (vitamin K1) biosynthesis. In Synechococcus sp. (strain ATCC 27144 / PCC 6301 / SAUG 1402/1) (Anacystis nidulans), this protein is 1,4-dihydroxy-2-naphthoyl-CoA hydrolase.